The chain runs to 357 residues: Holliday junction branch migration complex subunit RuvB (357 aa).

A large ATPase domain (RuvB-L) region spans residues 4–195; the sequence is TDKLAAKAVS…FGIVARLEFY (192 aa). ATP-binding positions include L34, R35, G76, K79, T80, T81, 142-144, R185, Y195, and R232; that span reads EDY. Position 80 (T80) interacts with Mg(2+). Residues 196–266 are small ATPAse domain (RuvB-S); the sequence is TPAELAKIVT…VADAALAMLD (71 aa). The tract at residues 269–357 is head domain (RuvB-H); sequence AVGFDLMDRK…PVRDLWDDNQ (89 aa). Residues R305, R324, and R329 each contribute to the DNA site.

It belongs to the RuvB family. As to quaternary structure, homohexamer. Forms an RuvA(8)-RuvB(12)-Holliday junction (HJ) complex. HJ DNA is sandwiched between 2 RuvA tetramers; dsDNA enters through RuvA and exits via RuvB. An RuvB hexamer assembles on each DNA strand where it exits the tetramer. Each RuvB hexamer is contacted by two RuvA subunits (via domain III) on 2 adjacent RuvB subunits; this complex drives branch migration. In the full resolvosome a probable DNA-RuvA(4)-RuvB(12)-RuvC(2) complex forms which resolves the HJ.

Its subcellular location is the cytoplasm. The enzyme catalyses ATP + H2O = ADP + phosphate + H(+). Functionally, the RuvA-RuvB-RuvC complex processes Holliday junction (HJ) DNA during genetic recombination and DNA repair, while the RuvA-RuvB complex plays an important role in the rescue of blocked DNA replication forks via replication fork reversal (RFR). RuvA specifically binds to HJ cruciform DNA, conferring on it an open structure. The RuvB hexamer acts as an ATP-dependent pump, pulling dsDNA into and through the RuvAB complex. RuvB forms 2 homohexamers on either side of HJ DNA bound by 1 or 2 RuvA tetramers; 4 subunits per hexamer contact DNA at a time. Coordinated motions by a converter formed by DNA-disengaged RuvB subunits stimulates ATP hydrolysis and nucleotide exchange. Immobilization of the converter enables RuvB to convert the ATP-contained energy into a lever motion, pulling 2 nucleotides of DNA out of the RuvA tetramer per ATP hydrolyzed, thus driving DNA branch migration. The RuvB motors rotate together with the DNA substrate, which together with the progressing nucleotide cycle form the mechanistic basis for DNA recombination by continuous HJ branch migration. Branch migration allows RuvC to scan DNA until it finds its consensus sequence, where it cleaves and resolves cruciform DNA. This Ralstonia pickettii (strain 12J) protein is Holliday junction branch migration complex subunit RuvB.